A 418-amino-acid chain; its full sequence is Serine hydroxymethyltransferase (418 aa).

Residues L121 and 125–127 (GHL) each bind (6S)-5,6,7,8-tetrahydrofolate. K230 carries the N6-(pyridoxal phosphate)lysine modification. (6S)-5,6,7,8-tetrahydrofolate is bound at residue 356-358 (SPF).

Belongs to the SHMT family. In terms of assembly, homodimer. Requires pyridoxal 5'-phosphate as cofactor.

The protein localises to the cytoplasm. The catalysed reaction is (6R)-5,10-methylene-5,6,7,8-tetrahydrofolate + glycine + H2O = (6S)-5,6,7,8-tetrahydrofolate + L-serine. Its pathway is one-carbon metabolism; tetrahydrofolate interconversion. It functions in the pathway amino-acid biosynthesis; glycine biosynthesis; glycine from L-serine: step 1/1. Its function is as follows. Catalyzes the reversible interconversion of serine and glycine with tetrahydrofolate (THF) serving as the one-carbon carrier. This reaction serves as the major source of one-carbon groups required for the biosynthesis of purines, thymidylate, methionine, and other important biomolecules. Also exhibits THF-independent aldolase activity toward beta-hydroxyamino acids, producing glycine and aldehydes, via a retro-aldol mechanism. The chain is Serine hydroxymethyltransferase from Shewanella piezotolerans (strain WP3 / JCM 13877).